We begin with the raw amino-acid sequence, 410 residues long: Transcription factor PHYTOCHROME INTERACTING FACTOR-LIKE 13 (410 aa).

The span at 82–92 (AAAAAGPSSHH) shows a compositional bias: low complexity. Disordered stretches follow at residues 82–110 (AAAAAGPSSHHAPPPDLPPPAARPPMRSG) and 137–225 (CRDA…AEVH). Residues 93–104 (APPPDLPPPAAR) are compositionally biased toward pro residues. A compositionally biased stretch (basic and acidic residues) spans 187-197 (GREDSDSRSED). Positions 209 to 219 (SSRRYGSKRRT) are enriched in basic residues. Positions 220–233 (RAAEVHNLSERRRR) are basic motif. The bHLH domain occupies 220–269 (RAAEVHNLSERRRRDRINEKMRALQELIPHCNKTDKASILDEAIEYLKSL). The interval 234 to 269 (DRINEKMRALQELIPHCNKTDKASILDEAIEYLKSL) is helix-loop-helix motif. The disordered stretch occupies residues 357 to 410 (PFLHPDGWQTVPPQVSGPYASGPQVAQQNQIPKASASTVLPNSGAEQPPTSDGI). Positions 380-410 (QVAQQNQIPKASASTVLPNSGAEQPPTSDGI) are enriched in polar residues.

It belongs to the bHLH protein family. In terms of assembly, interacts with PRR1. Interacts with LF. In terms of tissue distribution, highly expressed in the node portions of the stem. Expressed in the leaves and the basal part of shoots.

Its subcellular location is the nucleus. Its function is as follows. Transcription factor that may act as negative regulator of phyB-dependent light signal transduction. Transcription activator that acts as a positive regulator of internode elongation. May function via regulation of cell wall-related genes. May play a role in a drought-associated growth-restriction mechanism in response to drought stress. The protein is Transcription factor PHYTOCHROME INTERACTING FACTOR-LIKE 13 of Oryza sativa subsp. japonica (Rice).